The chain runs to 1336 residues: MRGAGGPRGPRGPAKMLLLLALACASPFPEEAPGPGGAGGPGGGLGGARPLNVALVFSGPAYAAEAARLGPAVAAAVRSPGLDVRPVALVLNGSDPRSLVLQLCDLLSGLRVHGVVFEDDSRAPAVAPILDFLSAQTSLPIVAVHGGAALVLTPKEKGSTFLQLGSSTEQQLQVIFEVLEEYDWTSFVAVTTRAPGHRAFLSYIEVLTDGSLVGWEHRGALTLDPGAGEAVLSAQLRSVSAQIRLLFCAREEAEPVFRAAEEAGLTGSGYVWFMVGPQLAGGGGSGAPGEPPLLPGGAPLPAGLFAVRSAGWRDDLARRVAAGVAVVARGAQALLRDYGFLPELGHDCRAQNRTHRGESLHRYFMNITWDNRDYSFNEDGFLVNPSLVVISLTRDRTWEVVGSWEQQTLRLKYPLWSRYGRFLQPVDDTQHLTVATLEERPFVIVEPADPISGTCIRDSVPCRSQLNRTHSPPPDAPRPEKRCCKGFCIDILKRLAHTIGFSYDLYLVTNGKHGKKIDGVWNGMIGEVFYQRADMAIGSLTINEERSEIVDFSVPFVETGISVMVARSNGTVSPSAFLEPYSPAVWVMMFVMCLTVVAVTVFIFEYLSPVGYNRSLATGKRPGGSTFTIGKSIWLLWALVFNNSVPVENPRGTTSKIMVLVWAFFAVIFLASYTANLAAFMIQEEYVDTVSGLSDRKFQRPQEQYPPLKFGTVPNGSTEKNIRSNYPDMHSYMVRYNQPRVEEALTQLKAGKLDAFIYDAAVLNYMARKDEGCKLVTIGSGKVFATTGYGIALHKGSRWKRPIDLALLQFLGDDEIEMLERLWLSGICHNDKIEVMSSKLDIDNMAGVFYMLLVAMGLSLLVFAWEHLVYWRLRHCLGPTHRMDFLLAFSRGMYSCCSAEAAPPPAKPPPPPQPLPSPAYPAPRPAPGPAPFVPRERASVDRWRRTKGAGPPGGAGLADGFHRYYGPIEPQGLGLGLGEARAAPRGAAGRPLSPPAAQPPQKPPPSYFAIVRDKEPAEPPAGAFPGFPSPPAPPAAAATAVGPPLCRLAFEDESPPAPARWPRSDPESQPLLGPGAGGAGGTGGAGGGAPAAPPPCRAAPPPCPYLDLEPSPSDSEDSESLGGASLGGLEPWWFADFPYPYAERLGPPPGRYWSVDKLGGWRAGSWDYLPPRSGPAAWHCRHCASLELLPPPRHLSCSHDGLDGGWWAPPPPPWAAGPLPRRRARCGCPRSHPHRPRASHRTPAAAAPHHHRHRRAAGGWDLPPPAPTSRSLEDLSSCPRAAPARRLTGPSRHARRCPHAAHWGPPLPTASHRRHRGGDLGTRRGSAHFSSLESEV.

The signal sequence occupies residues 1-27 (MRGAGGPRGPRGPAKMLLLLALACASP). The Extracellular portion of the chain corresponds to 28–582 (FPEEAPGPGG…SPSAFLEPYS (555 aa)). The N-linked (GlcNAc...) asparagine glycan is linked to Asn92. Residues Cys104 and Cys348 are joined by a disulfide bond. Asn352, Asn366, Asn384, and Asn467 each carry an N-linked (GlcNAc...) asparagine glycan. Intrachain disulfides connect Cys455/Cys483 and Cys462/Cys484. Residues Ser539, Thr541, and Arg546 each coordinate L-glutamate. A glycan (N-linked (GlcNAc...) asparagine) is linked at Asn569. Residues 583–604 (PAVWVMMFVMCLTVVAVTVFIF) form a helical membrane-spanning segment. Residues 605–629 (EYLSPVGYNRSLATGKRPGGSTFTI) lie on the Cytoplasmic side of the membrane. Positions 630-641 (GKSIWLLWALVF) form an intramembrane region, discontinuously helical. The interval 631-650 (KSIWLLWALVFNNSVPVENP) is pore-forming. At 642–653 (NNSVPVENPRGT) the chain is on the cytoplasmic side. Residues 654-674 (TSKIMVLVWAFFAVIFLASYT) traverse the membrane as a helical segment. At 675–843 (ANLAAFMIQE…EVMSSKLDID (169 aa)) the chain is on the extracellular side. Residues Ser717, Thr718, and Asp759 each coordinate L-glutamate. The cysteines at positions 773 and 828 are disulfide-linked. The helical transmembrane segment at 844 to 867 (NMAGVFYMLLVAMGLSLLVFAWEH) threads the bilayer. At 868-1336 (LVYWRLRHCL…AHFSSLESEV (469 aa)) the chain is on the cytoplasmic side. Disordered stretches follow at residues 900 to 934 (EAAP…PFVP), 981 to 1123 (RAAP…SLGG), and 1225 to 1336 (RCGC…ESEV). Residues 902–932 (APPPAKPPPPPQPLPSPAYPAPRPAPGPAPF) are compositionally biased toward pro residues. Positions 981-991 (RAAPRGAAGRP) are enriched in low complexity. The segment covering 992–1006 (LSPPAAQPPQKPPPS) has biased composition (pro residues). Positions 1035–1044 (AAAATAVGPP) are enriched in low complexity. Gly residues predominate over residues 1074–1089 (PGAGGAGGTGGAGGGA). The segment covering 1091 to 1104 (AAPPPCRAAPPPCP) has biased composition (pro residues). Basic residues predominate over residues 1225 to 1240 (RCGCPRSHPHRPRASH). Arg1316 carries the omega-N-methylarginine modification. Position 1326 is a phosphoserine (Ser1326). The PDZ-binding signature appears at 1334-1336 (SEV).

Belongs to the glutamate-gated ion channel (TC 1.A.10.1) family. NR2D/GRIN2D subfamily. In terms of assembly, heterotetramer. Forms heterotetrameric channels composed of two GluN1/zeta subunits (GRIN1), and two identical GluN2/epsilon subunits (GRIN2A, GRIN2B, GRIN2C or GRIN2D) or GluN3 subunits (GRIN3A or GRIN3B) (in vitro). In vivo, the subunit composition may depend on the expression levels of the different subunits. Interacts with PDZ domains of PATJ and DLG4.

It is found in the cell membrane. The protein resides in the postsynaptic cell membrane. It catalyses the reaction Ca(2+)(in) = Ca(2+)(out). The catalysed reaction is Na(+)(in) = Na(+)(out). The enzyme catalyses K(+)(in) = K(+)(out). Component of N-methyl-D-aspartate (NMDA) receptors (NMDARs) that function as heterotetrameric, ligand-gated cation channels with high calcium permeability and voltage-dependent block by Mg(2+). Participates in synaptic plasticity for learning and memory formation. Channel activation requires binding of the neurotransmitter L-glutamate to the GluN2 subunit, glycine or D-serine binding to the GluN1 subunit, plus membrane depolarization to eliminate channel inhibition by Mg(2+). NMDARs mediate simultaneously the potasium efflux and the influx of calcium and sodium. Each GluN2 subunit confers differential attributes to channel properties, including activation, deactivation and desensitization kinetics, pH sensitivity, Ca2(+) permeability, and binding to allosteric modulators. The polypeptide is Glutamate receptor ionotropic, NMDA 2D (Homo sapiens (Human)).